We begin with the raw amino-acid sequence, 534 residues long: Serine/threonine-protein phosphatase 2B catalytic subunit (534 aa).

Asp88, His90, and Asp116 together coordinate Fe cation. Residues Asp116 and Asn148 each contribute to the Zn(2+) site. The active-site Proton donor is the His149. His197 and His279 together coordinate Zn(2+). Disordered stretches follow at residues 375-398 (LEDE…DVES) and 475-534 (PSHE…TREA). Composition is skewed to basic and acidic residues over residues 475-497 (PSHE…RAQQ) and 524-534 (QRDAARETREA).

Belongs to the PPP phosphatase family. PP-2B subfamily. In terms of assembly, composed of two components (A and B), the A component is the catalytic subunit and the B component confers calcium sensitivity. Requires Fe(3+) as cofactor. Zn(2+) is required as a cofactor.

It carries out the reaction O-phospho-L-seryl-[protein] + H2O = L-seryl-[protein] + phosphate. The catalysed reaction is O-phospho-L-threonyl-[protein] + H2O = L-threonyl-[protein] + phosphate. Calcium-dependent, calmodulin-stimulated protein phosphatase. This subunit may have a role in the calmodulin activation of calcineurin. This Aspergillus fumigatus (strain ATCC MYA-4609 / CBS 101355 / FGSC A1100 / Af293) (Neosartorya fumigata) protein is Serine/threonine-protein phosphatase 2B catalytic subunit (cnaA).